The chain runs to 76 residues: RNA-binding protein KhpA (76 aa).

Residues Gly-30 to Asp-76 enclose the KH domain.

The protein belongs to the KhpA RNA-binding protein family.

It localises to the cytoplasm. Its function is as follows. A probable RNA-binding protein. The polypeptide is RNA-binding protein KhpA (Leifsonia xyli subsp. xyli (strain CTCB07)).